Consider the following 246-residue polypeptide: Small ribosomal subunit protein uS3A (246 aa).

The region spanning 21–92 is the KH type-2 domain; sequence LNEFLTRELA…SVELYAEKVA (72 aa). Positions 215 to 246 are disordered; it reads DEIVPTTPISEQKAAKPDQPQPPAMPQPVATA.

Belongs to the universal ribosomal protein uS3 family.

The protein resides in the cytoplasm. Its subcellular location is the nucleus. The protein localises to the nucleolus. It is found in the mitochondrion inner membrane. It localises to the cytoskeleton. The protein resides in the spindle. It catalyses the reaction 2'-deoxyribonucleotide-(2'-deoxyribose 5'-phosphate)-2'-deoxyribonucleotide-DNA = a 3'-end 2'-deoxyribonucleotide-(2,3-dehydro-2,3-deoxyribose 5'-phosphate)-DNA + a 5'-end 5'-phospho-2'-deoxyribonucleoside-DNA + H(+). Functionally, component of the small ribosomal subunit. The ribosome is a large ribonucleoprotein complex responsible for the synthesis of proteins in the cell. Has endonuclease activity and plays a role in repair of damaged DNA. Also involved in other processes including regulation of transcription, translation of its cognate mRNA, spindle formation and chromosome movement during mitosis, and apoptosis. This chain is Small ribosomal subunit protein uS3A (rps3-a), found in Xenopus laevis (African clawed frog).